Consider the following 104-residue polypeptide: Large ribosomal subunit protein bL28 (104 aa).

The protein belongs to the bacterial ribosomal protein bL28 family.

In Wolbachia sp. subsp. Brugia malayi (strain TRS), this protein is Large ribosomal subunit protein bL28.